The chain runs to 111 residues: Complement inhibitor CirpT1 (111 aa).

A signal peptide spans 1–19 (MATLIAARTKRKAPRVRIF). Disulfide bonds link Cys40–Cys64, Cys59–Cys98, Cys76–Cys99, and Cys85–Cys104.

This sequence belongs to the CirpT family. Expressed in salivary glands.

It is found in the secreted. Functionally, complement inhibitor. Prevents complement-mediated activation of C5 by sterically preventing direct binding of C5 to its convertase (binding with domains MG4 and MG5). Binds C5 at a different binding site than the other tick complement inhibitors OmCI and RaCI3, and the drug eculizumab. Inhibits the complement in human, rat and guinea pig, and also shows a reduced inhibition in rabbit and pig. The chain is Complement inhibitor CirpT1 from Rhipicephalus pulchellus (Yellow backed tick).